The following is a 243-amino-acid chain: R-spondin-2 (243 aa).

An N-terminal signal peptide occupies residues methionine 1 to cysteine 21. 11 disulfides stabilise this stretch: cysteine 40–cysteine 46, cysteine 43–cysteine 52, cysteine 55–cysteine 74, cysteine 78–cysteine 93, cysteine 96–cysteine 104, cysteine 101–cysteine 110, cysteine 113–cysteine 124, cysteine 128–cysteine 141, cysteine 145–cysteine 187, cysteine 156–cysteine 163, and cysteine 196–cysteine 203. The stretch at methionine 90 to proline 134 is one FU repeat. Residues glycine 144–proline 204 form the TSP type-1 domain. N-linked (GlcNAc...) asparagine glycosylation occurs at asparagine 160. The segment at histidine 202–glutamine 243 is disordered. Basic residues predominate over residues threonine 209–leucine 224.

It belongs to the R-spondin family. In terms of assembly, binds heparin.

The protein localises to the secreted. Activator of the canonical Wnt signaling pathway by acting as a ligand for lgr4-6 receptors. Upon binding to lgr4-6 (lgr4, lgr5 or lgr6), lgr4-6 associate with phosphorylated lrp6 and frizzled receptors that are activated by extracellular Wnt receptors, triggering the canonical Wnt signaling pathway to increase expression of target genes. Acts both in the canonical. Wnt/beta-catenin-dependent pathway and in non-canonical Wnt signaling pathway. Activates neural markers and promotes muscle formation. Overexpression blocks activin, nodal and BMP4 signaling, suggesting that it may negatively regulate the TGF-beta pathway. During embryonic development, plays a crucial role in limb specification, amplifying the Wnt signaling pathway independently of LGR4-6 receptors, possibly by acting as a direct antagonistic ligand to RNF43 and ZNRF3, hence governing the number of limbs an embryo should form. The chain is R-spondin-2 (rspo2) from Xenopus tropicalis (Western clawed frog).